The chain runs to 329 residues: Diaminopimelate epimerase (329 aa).

Asn14 and Asn73 together coordinate substrate. Cys82 functions as the Proton donor in the catalytic mechanism. Residues Gly83–Asn84, Asn170, Asn206, and Glu224–Arg225 contribute to the substrate site. Cys233 functions as the Proton acceptor in the catalytic mechanism. Gly234 to Thr235 contacts substrate.

The protein belongs to the diaminopimelate epimerase family. Homodimer.

It is found in the cytoplasm. It catalyses the reaction (2S,6S)-2,6-diaminopimelate = meso-2,6-diaminopimelate. It participates in amino-acid biosynthesis; L-lysine biosynthesis via DAP pathway; DL-2,6-diaminopimelate from LL-2,6-diaminopimelate: step 1/1. Its function is as follows. Catalyzes the stereoinversion of LL-2,6-diaminopimelate (L,L-DAP) to meso-diaminopimelate (meso-DAP), a precursor of L-lysine and an essential component of the bacterial peptidoglycan. This chain is Diaminopimelate epimerase, found in Listeria monocytogenes serotype 4b (strain F2365).